Here is a 361-residue protein sequence, read N- to C-terminus: G-protein coupled receptor 52 (361 aa).

The Extracellular portion of the chain corresponds to 1-44 (MNESRWTEWRILNMSSSIVNVSEHHSCPLGFGHYSVEDVCIFET). Asn-2, Asn-13, and Asn-20 each carry an N-linked (GlcNAc...) asparagine glycan. The chain crosses the membrane as a helical span at residues 45–65 (VVIVLLTFLIISGNLTVIFVF). Residues 66-81 (HCAPLLHHYTTSYFIQ) are Cytoplasmic-facing. Residues 82–102 (TMAYADLLVGVTCLVPTLSLL) form a helical membrane-spanning segment. Residues 103–115 (HYSTGVHESLTCQ) lie on the Extracellular side of the membrane. Cysteines 114 and 193 form a disulfide. Residues 116 to 136 (VFGYIISVLKSVSMACLACIS) traverse the membrane as a helical segment. Topologically, residues 137–159 (VDRYLAITKPLSYNQLVTPCRLR) are cytoplasmic. Residues 160–180 (ICIIMIWIYSCLIFLPSFFGW) form a helical membrane-spanning segment. Residues 181–205 (GKPGYHGDIFEWCATSWLTSAYFTC) are Extracellular-facing. Residues 206-226 (FIVCLLYAPAALVVCFTYFHI) form a helical membrane-spanning segment. Residues 227-265 (FKICRQHTKEINDRRARFPSHEVEASREAGHSPDRRYAM) lie on the Cytoplasmic side of the membrane. Residues 266–286 (VLFRITSVFYMLWLPYIIYFL) traverse the membrane as a helical segment. Residues 287–296 (LESSRVLDNP) lie on the Extracellular side of the membrane. A helical transmembrane segment spans residues 297-317 (TLSFLTTWLAISNSFCNCVIY). At 318–361 (SLSNSVFRLGLRRLSETMCTSCVCAKDQEAQDPKPRRRANSCSI) the chain is on the cytoplasmic side.

It belongs to the G-protein coupled receptor 1 family. As to expression, expressed in brain, especially in striatum. Expressed in the striatum, nucleus accumbens, and lateral globus pallidus.

Its subcellular location is the cell membrane. In terms of biological role, G- protein coupled receptor activated by antipsychotics reserpine leading to an increase in intracellular cAMP and its internalization. May play a role in locomotor activity through modulation of dopamine, NMDA and ADORA2A-induced locomotor activity. These behavioral changes are accompanied by modulation of the dopamine receptor signaling pathway in striatum. Modulates HTT level via cAMP-dependent but PKA independent mechanisms throught activation of RAB39B that translocates HTT to the endoplasmic reticulum, thus avoiding proteasome degradation. The protein is G-protein coupled receptor 52 of Mus musculus (Mouse).